Here is a 267-residue protein sequence, read N- to C-terminus: 2-keto-3-deoxy-L-rhamnonate aldolase (267 aa).

Catalysis depends on histidine 49, which acts as the Proton acceptor. A substrate-binding site is contributed by glutamine 151. Glutamate 153 provides a ligand contact to Mg(2+). 2 residues coordinate substrate: alanine 178 and aspartate 179. Aspartate 179 contacts Mg(2+).

Belongs to the HpcH/HpaI aldolase family. KDR aldolase subfamily. Homohexamer. Requires Mg(2+) as cofactor.

The enzyme catalyses 2-dehydro-3-deoxy-L-rhamnonate = (S)-lactaldehyde + pyruvate. Catalyzes the reversible retro-aldol cleavage of 2-keto-3-deoxy-L-rhamnonate (KDR) to pyruvate and lactaldehyde. The sequence is that of 2-keto-3-deoxy-L-rhamnonate aldolase from Escherichia coli (strain UTI89 / UPEC).